We begin with the raw amino-acid sequence, 65 residues long: Cytochrome b-c1 complex subunit 9, mitochondrial (65 aa).

The helical transmembrane segment at 14–34 (IYVATIFGGAFAFQGFFDVAV) threads the bilayer.

The protein belongs to the UQCR10/QCR9 family. As to quaternary structure, component of the ubiquinol-cytochrome c oxidoreductase (cytochrome b-c1 complex, complex III, CIII), a multisubunit enzyme composed of 10 subunits. The complex is composed of 3 respiratory subunits cytochrome b (COB), cytochrome c1 (CYT1) and Rieske protein (RIP1), 2 core protein subunits COR1 and QCR2, and 5 low-molecular weight protein subunits QCR6, QCR7, QCR8, QCR9 and QCR10. The complex exists as an obligatory dimer and forms supercomplexes (SCs) in the inner mitochondrial membrane with a monomer or a dimer of cytochrome c oxidase (complex IV, CIV), resulting in 2 different assemblies (supercomplexes III(2)IV and III(2)IV(2)).

It localises to the membrane. The protein resides in the mitochondrion inner membrane. In terms of biological role, component of the ubiquinol-cytochrome c oxidoreductase, a multisubunit transmembrane complex that is part of the mitochondrial electron transport chain which drives oxidative phosphorylation. The complex plays an important role in the uptake of multiple carbon sources present in different host niches. The protein is Cytochrome b-c1 complex subunit 9, mitochondrial of Candida albicans (strain SC5314 / ATCC MYA-2876) (Yeast).